We begin with the raw amino-acid sequence, 318 residues long: MKAFTYERVNTPAEAALSAQRVPGAKFIAGGTNLLDLMKLEIETPTHLIDVNGLGLDKIEVTDAGGLRIGALVRNTDLAAHERVRRDYAVLSRALLAGASGQLRNQATTAGNLLQRTRCPYFYDTNQPCNKRLPGSGCAALEGFSRQHAVVGVSEACIATHPSDMAVAMRLLDAVVETITPEGKTRSITLADFYHPPGKTPHIETALLPGELIVAVTLPPPLGGKHIYRKVRDRASYAFALVSVAAIIQPDGSGRVALGGVAHKPWRIEAADAQLSQGAQAVYDTLFASAHPTAENTFKLLLAKRTLASVLAEARAQA.

One can recognise an FAD-binding PCMH-type domain in the interval 1–223 (MKAFTYERVN…VAVTLPPPLG (223 aa)). Residues 26–34 (KFIAGGTNL) and Thr108 each bind FAD. [4Fe-4S] cluster contacts are provided by Cys119, Cys129, Cys138, and Cys157. FAD contacts are provided by Asp164, Ile213, and Lys230.

As to quaternary structure, heterotrimer composed of PaoA, PaoB and PaoC. FAD serves as cofactor. Requires [4Fe-4S] cluster as cofactor.

It is found in the periplasm. It carries out the reaction an aldehyde + A + H2O = a carboxylate + AH2 + H(+). The complex requires PaoD for activity. Its function is as follows. Oxidizes aldehydes to the corresponding carboxylic acids with a preference for aromatic aldehydes. It might play a role in the detoxification of aldehydes to avoid cell damage. This is Aldehyde oxidoreductase FAD-binding subunit PaoB from Escherichia coli (strain K12).